The following is a 254-amino-acid chain: PF03932 family protein CutC (254 aa).

The protein belongs to the CutC family.

Its subcellular location is the cytoplasm. The sequence is that of PF03932 family protein CutC from Yersinia enterocolitica serotype O:8 / biotype 1B (strain NCTC 13174 / 8081).